The chain runs to 386 residues: Probable mannan endo-1,4-beta-mannosidase A (386 aa).

The N-terminal stretch at 1–21 (MKLNPSLLTAAGLVSAQLASA) is a signal peptide. Substrate-binding residues include Trp-95 and Asn-207. Catalysis depends on Glu-208, which acts as the Proton donor. Tyr-283 provides a ligand contact to substrate. Glu-316 functions as the Nucleophile in the catalytic mechanism. Asn-336 carries an N-linked (GlcNAc...) asparagine glycan. Trp-346 serves as a coordination point for substrate.

It belongs to the glycosyl hydrolase 5 (cellulase A) family.

It is found in the secreted. The catalysed reaction is Random hydrolysis of (1-&gt;4)-beta-D-mannosidic linkages in mannans, galactomannans and glucomannans.. In terms of biological role, endo-1,4-mannanase, a crucial enzyme for depolymerization of seed galactomannans and wood galactoglucomannans. The sequence is that of Probable mannan endo-1,4-beta-mannosidase A (manA) from Aspergillus oryzae (strain ATCC 42149 / RIB 40) (Yellow koji mold).